The primary structure comprises 227 residues: uncharacterized protein (227 aa).

This is an uncharacterized protein from Schizosaccharomyces pombe (strain 972 / ATCC 24843) (Fission yeast).